A 314-amino-acid chain; its full sequence is Ribosomal RNA small subunit methyltransferase H (314 aa).

S-adenosyl-L-methionine-binding positions include 36–38 (GGH), aspartate 56, phenylalanine 82, aspartate 104, and glutamine 111.

This sequence belongs to the methyltransferase superfamily. RsmH family.

It localises to the cytoplasm. It carries out the reaction cytidine(1402) in 16S rRNA + S-adenosyl-L-methionine = N(4)-methylcytidine(1402) in 16S rRNA + S-adenosyl-L-homocysteine + H(+). Its function is as follows. Specifically methylates the N4 position of cytidine in position 1402 (C1402) of 16S rRNA. This Ectopseudomonas mendocina (strain ymp) (Pseudomonas mendocina) protein is Ribosomal RNA small subunit methyltransferase H.